The primary structure comprises 361 residues: Caveolae-associated protein 4 (361 aa).

The tract at residues 1–21 (MEHNGSASNADKIHQNRLSNV) is disordered. Residues 100-124 (IKDVKARVEKQQTHVKKVEAKQEEI) adopt a coiled-coil conformation. 3 positions are modified to phosphoserine: S152, S171, and S172. Residues 204-248 (ENMQKTRQNFDKKVNRIRTRIVTPERRERLRQSGERLRQSGERLK) are a coiled coil. Basic and acidic residues predominate over residues 230 to 255 (RERLRQSGERLRQSGERLKQSGERFK). 2 disordered regions span residues 230–283 (RERL…AVAE) and 310–346 (PEAL…FKPQ). T335 carries the phosphothreonine modification. Residue S354 is modified to Phosphoserine.

This sequence belongs to the CAVIN family. In terms of assembly, component of the CAVIN complex composed of CAVIN1, CAVIN2, CAVIN3 and CAVIN4. Interacts with CAVIN1, ADRA1A, ADRA1B, MAPK1 and MAPK3. Interacts with CAVIN2; this augments the transactivation of NPPA.

It localises to the cytoplasm. The protein localises to the myofibril. The protein resides in the sarcomere. Its subcellular location is the cytosol. It is found in the cell membrane. It localises to the sarcolemma. The protein localises to the membrane. The protein resides in the caveola. Its function is as follows. Modulates the morphology of formed caveolae in cardiomyocytes, but is not required for caveolar formation. Facilitates the recruitment of MAPK1/3 to caveolae within cardiomyocytes and regulates alpha-1 adrenergic receptor-induced hypertrophic responses in cardiomyocytes through MAPK1/3 activation. Contributes to proper membrane localization and stabilization of caveolin-3 (CAV3) in cardiomyocytes. Induces RHOA activation and activates NPPA transcription and myofibrillar organization through the Rho/ROCK signaling pathway. In Bos taurus (Bovine), this protein is Caveolae-associated protein 4 (CAVIN4).